A 774-amino-acid chain; its full sequence is Chondroitin sulfate synthase 2 (774 aa).

The Cytoplasmic segment spans residues M1–P15. The chain crosses the membrane as a helical; Signal-anchor for type II membrane protein span at residues V16–V34. Residues E35 to T774 are Lumenal-facing. Residues P37–A103 are disordered. The segment covering G54–P67 has biased composition (polar residues). N138 and N361 each carry an N-linked (GlcNAc...) asparagine glycan. D616 serves as a coordination point for a divalent metal cation.

The protein belongs to the chondroitin N-acetylgalactosaminyltransferase family. Interacts with PRKN. Mn(2+) serves as cofactor. The cofactor is Co(2+). Isoform 1, isoform 2 and isoform 3 are expressed in brain (at protein level).

Its subcellular location is the golgi apparatus. It is found in the golgi stack membrane. It localises to the cytoplasm. The protein localises to the cytosol. The protein resides in the mitochondrion. Its subcellular location is the mitochondrion matrix. It catalyses the reaction 3-O-(beta-D-GlcA-(1-&gt;3)-beta-D-GalNAc-(1-&gt;4)-beta-D-GlcA-(1-&gt;3)-beta-D-Gal-(1-&gt;3)-beta-D-Gal-(1-&gt;4)-beta-D-Xyl)-L-seryl-[protein] + UDP-N-acetyl-alpha-D-galactosamine = 3-O-(beta-D-GalNAc-(1-&gt;4)-beta-D-GlcA-(1-&gt;3)-beta-D-GalNAc-(1-&gt;4)-beta-D-GlcA-(1-&gt;3)-beta-D-Gal-(1-&gt;3)-beta-D-Gal-(1-&gt;4)-beta-D-Xyl)-L-seryl-[protein] + UDP + H(+). The enzyme catalyses 3-O-{beta-D-GlcA-(1-&gt;3)-[beta-D-GalNAc-(1-&gt;4)-beta-D-GlcA-(1-&gt;3)](n)-beta-D-GalNAc-(1-&gt;4)-beta-D-GlcA-(1-&gt;3)-beta-D-Gal-(1-&gt;3)-beta-D-Gal-(1-&gt;4)-beta-D-Xyl}-L-seryl-[protein] + UDP-N-acetyl-alpha-D-galactosamine = 3-O-{[beta-D-GalNAc-(1-&gt;4)-beta-D-GlcA-(1-&gt;3)](n+1)-beta-D-GalNAc-(1-&gt;4)-beta-D-GlcA-(1-&gt;3)-beta-D-Gal-(1-&gt;3)-beta-D-Gal-(1-&gt;4)-beta-D-Xyl}-L-seryl-[protein] + UDP + H(+). The catalysed reaction is 3-O-(beta-D-GalNAc-(1-&gt;4)-beta-D-GlcA-(1-&gt;3)-beta-D-Gal-(1-&gt;3)-beta-D-Gal-(1-&gt;4)-beta-D-Xyl)-L-seryl-[protein] + UDP-alpha-D-glucuronate = 3-O-(beta-D-GlcA-(1-&gt;3)-beta-D-GalNAc-(1-&gt;4)-beta-D-GlcA-(1-&gt;3)-beta-D-Gal-(1-&gt;3)-beta-D-Gal-(1-&gt;4)-beta-D-Xyl)-L-seryl-[protein] + UDP + H(+). It carries out the reaction 3-O-{[beta-D-GalNAc-(1-&gt;4)-beta-D-GlcA-(1-&gt;3)](n)-beta-D-GalNAc-(1-&gt;4)-beta-D-GlcA-(1-&gt;3)-beta-D-Gal-(1-&gt;3)-beta-D-Gal-(1-&gt;4)-beta-D-Xyl}-L-seryl-[protein] + UDP-alpha-D-glucuronate = 3-O-{beta-D-GlcA-(1-&gt;3)-[beta-D-GalNAc-(1-&gt;4)-beta-D-GlcA-(1-&gt;3)](n)-beta-D-GalNAc-(1-&gt;4)-beta-D-GlcA-(1-&gt;3)-beta-D-Gal-(1-&gt;3)-beta-D-Gal-(1-&gt;4)-beta-D-Xyl}-L-seryl-[protein] + UDP + H(+). Has both beta-1,3-glucuronic acid and beta-1,4-N-acetylgalactosamine transferase activity. Transfers glucuronic acid (GlcUA) from UDP-GlcUA and N-acetylgalactosamine (GalNAc) from UDP-GalNAc to the non-reducing end of the elongating chondroitin polymer. Seems to act as a specific activating factor for CHSY1 in chondroitin polymerization. In terms of biological role, may facilitate PRKN transport into the mitochondria. In collaboration with PRKN, may enhance cell viability and protect cells from oxidative stress. The protein is Chondroitin sulfate synthase 2 of Mus musculus (Mouse).